The sequence spans 321 residues: Lipoyl synthase (321 aa).

Residues Cys68, Cys73, Cys79, Cys94, Cys98, Cys101, and Ser308 each coordinate [4Fe-4S] cluster. Residues 80–297 form the Radical SAM core domain; that stretch reads FNHGTATFMI…KALADELGFT (218 aa).

Belongs to the radical SAM superfamily. Lipoyl synthase family. It depends on [4Fe-4S] cluster as a cofactor.

It is found in the cytoplasm. The catalysed reaction is [[Fe-S] cluster scaffold protein carrying a second [4Fe-4S](2+) cluster] + N(6)-octanoyl-L-lysyl-[protein] + 2 oxidized [2Fe-2S]-[ferredoxin] + 2 S-adenosyl-L-methionine + 4 H(+) = [[Fe-S] cluster scaffold protein] + N(6)-[(R)-dihydrolipoyl]-L-lysyl-[protein] + 4 Fe(3+) + 2 hydrogen sulfide + 2 5'-deoxyadenosine + 2 L-methionine + 2 reduced [2Fe-2S]-[ferredoxin]. Its pathway is protein modification; protein lipoylation via endogenous pathway; protein N(6)-(lipoyl)lysine from octanoyl-[acyl-carrier-protein]: step 2/2. Catalyzes the radical-mediated insertion of two sulfur atoms into the C-6 and C-8 positions of the octanoyl moiety bound to the lipoyl domains of lipoate-dependent enzymes, thereby converting the octanoylated domains into lipoylated derivatives. The chain is Lipoyl synthase from Shewanella oneidensis (strain ATCC 700550 / JCM 31522 / CIP 106686 / LMG 19005 / NCIMB 14063 / MR-1).